Consider the following 189-residue polypeptide: MSNFLLVIPEDVIKGCSKADKLVVTGEFDNWRHSDYVLQYDGSTQNYRVQIPRRKGQRSTMFKVVINDKKWVTLNYFDTVTDKSGYTNNILHFKDNEASQLMDIPLSPHTRSNTAKGKPEDDSLNDYVNLSSHSDLSSTEEIVCWNSDMEDENMDATIQCDFHQAFNSRKESLNGLMCIAKKVKTYWNK.

Residues 1–96 (MSNFLLVIPE…TNNILHFKDN (96 aa)) are binds glycogen. The segment at 97 to 189 (EASQLMDIPL…AKKVKTYWNK (93 aa)) is required for sequestration into autophagosomes. The residue at position 107 (Ser-107) is a Phosphoserine. An ATG8 interaction motif (AIM) motif is present at residues 127–130 (YVNL). The residue at position 172 (Ser-172) is a Phosphoserine. Residues 176 to 187 (LMCIAKKVKTYW) form a may facilitate interactions with the autophagosome membrane region.

In terms of assembly, interacts with ATG8.

The protein localises to the cytoplasm. Its subcellular location is the cytosol. It is found in the cytoplasmic vesicle. It localises to the autophagosome. Functionally, autophagy receptor for glycogen that facilitates the sequestration of glycogen assemblies into autophagosomes as part of bulk autophagy; the autophagy of glycogen (glycophagy) is stimulated during prolonged nitrogen starvation and during sporulation. The sequence is that of Autophagy receptor ATG45 from Saccharomyces cerevisiae (strain ATCC 204508 / S288c) (Baker's yeast).